We begin with the raw amino-acid sequence, 310 residues long: Methionyl-tRNA formyltransferase (310 aa).

A (6S)-5,6,7,8-tetrahydrofolate-binding site is contributed by 110 to 113 (SLLP).

The protein belongs to the Fmt family.

It catalyses the reaction L-methionyl-tRNA(fMet) + (6R)-10-formyltetrahydrofolate = N-formyl-L-methionyl-tRNA(fMet) + (6S)-5,6,7,8-tetrahydrofolate + H(+). In terms of biological role, attaches a formyl group to the free amino group of methionyl-tRNA(fMet). The formyl group appears to play a dual role in the initiator identity of N-formylmethionyl-tRNA by promoting its recognition by IF2 and preventing the misappropriation of this tRNA by the elongation apparatus. This is Methionyl-tRNA formyltransferase from Streptomyces griseus subsp. griseus (strain JCM 4626 / CBS 651.72 / NBRC 13350 / KCC S-0626 / ISP 5235).